The chain runs to 509 residues: Dihydrolipoyl dehydrogenase, mitochondrial (509 aa).

A mitochondrion-targeting transit peptide spans 1-35; the sequence is MQSWSRVYCSLVKRGHFSRISHGLQGVSVVPLRTY. At lysine 66 the chain carries N6-acetyllysine; alternate. Residue lysine 66 is modified to N6-succinyllysine; alternate. FAD contacts are provided by residues 71-80 and lysine 89; that span reads EKNETLGGTC. A disulfide bond links cysteine 80 and cysteine 85. Lysine 104, lysine 122, lysine 132, and lysine 143 each carry N6-acetyllysine; alternate. 4 positions are modified to N6-succinyllysine; alternate: lysine 104, lysine 122, lysine 132, and lysine 143. Glycine 154 contributes to the FAD binding site. An N6-succinyllysine mark is found at lysine 159 and lysine 166. 183–185 is a binding site for FAD; it reads TGS. NAD(+) contacts are provided by residues 220–227 and glutamate 243; that span reads GAGVIGVE. N6-succinyllysine is present on residues lysine 273 and lysine 277. Valine 278 serves as a coordination point for NAD(+). Serine 285 and serine 297 each carry phosphoserine. Glycine 314 is an NAD(+) binding site. An N6-acetyllysine modification is found at lysine 346. FAD is bound by residues aspartate 355 and 361-364; that span reads MLAH. Lysine 410 carries the N6-acetyllysine; alternate modification. An N6-succinyllysine; alternate modification is found at lysine 410. An N6-acetyllysine mark is found at lysine 417 and lysine 420. An N6-succinyllysine modification is found at lysine 430. Histidine 487 functions as the Proton acceptor in the catalytic mechanism. Residue lysine 505 is modified to N6-acetyllysine; alternate. The residue at position 505 (lysine 505) is an N6-succinyllysine; alternate.

The protein belongs to the class-I pyridine nucleotide-disulfide oxidoreductase family. As to quaternary structure, homodimer. Part of the multimeric pyruvate dehydrogenase complex that contains multiple copies of pyruvate dehydrogenase (subunits PDHA (PDHA1 or PDHA2) and PDHB, E1), dihydrolipoamide acetyltransferase (DLAT, E2) and lipoamide dehydrogenase (DLD, E3). These subunits are bound to an inner core composed of about 48 DLAT and 12 PDHX molecules (by non covalent bonds). The 2-oxoglutarate dehydrogenase complex is composed of OGDH (2-oxoglutarate dehydrogenase; E1), DLST (dihydrolipoamide succinyltransferase; E2), DLD (dihydrolipoamide dehydrogenase; E3) and the assembly factor KGD4. It contains multiple copies of the three enzymatic components (E1, E2 and E3). In the nucleus, the 2-oxoglutarate dehydrogenase complex associates with KAT2A. Interacts with PDHX. FAD is required as a cofactor. Post-translationally, tyrosine phosphorylated.

The protein resides in the mitochondrion matrix. Its subcellular location is the nucleus. The protein localises to the cell projection. It is found in the cilium. It localises to the flagellum. The protein resides in the cytoplasmic vesicle. Its subcellular location is the secretory vesicle. The protein localises to the acrosome. It catalyses the reaction N(6)-[(R)-dihydrolipoyl]-L-lysyl-[protein] + NAD(+) = N(6)-[(R)-lipoyl]-L-lysyl-[protein] + NADH + H(+). Functionally, lipoamide dehydrogenase is a component of the glycine cleavage system as well as an E3 component of three alpha-ketoacid dehydrogenase complexes (pyruvate-, alpha-ketoglutarate-, and branched-chain amino acid-dehydrogenase complex). The 2-oxoglutarate dehydrogenase complex is mainly active in the mitochondrion. A fraction of the 2-oxoglutarate dehydrogenase complex also localizes in the nucleus and is required for lysine succinylation of histones: associates with KAT2A on chromatin and provides succinyl-CoA to histone succinyltransferase KAT2A. In monomeric form may have additional moonlighting function as serine protease. Involved in the hyperactivation of spermatazoa during capacitation and in the spermatazoal acrosome reaction. This chain is Dihydrolipoyl dehydrogenase, mitochondrial (DLD), found in Bos taurus (Bovine).